The chain runs to 188 residues: Pterocarpan synthase 1 (188 aa).

The signal sequence occupies residues 1-23 (MAKSTTFFISLTLPFLLLSVVTA). N127 carries N-linked (GlcNAc...) asparagine glycosylation.

The protein belongs to the plant dirigent protein family. In terms of assembly, homodimer.

The protein resides in the secreted. It localises to the extracellular space. Its subcellular location is the apoplast. The catalysed reaction is a (4R)-4,2'-dihydroxyisoflavan = a pterocarpan + H2O.. It carries out the reaction (3R,4R)-7,2'-dihydroxy-4'-methoxyisoflavanol = (-)-medicarpin + H2O. The enzyme catalyses (3S,4R)-7,2'-dihydroxy-4'-methoxyisoflavanol = (+)-medicarpin + H2O. It catalyses the reaction (3R,4R)-3-(6-hydroxy-1,3-benzodioxol-5-yl)-3,4-dihydro-2H-chromene-4,7-diol = (-)-maackiain + H2O. The catalysed reaction is (3R,4R)-7,2',4'-trihydroxyisoflavanol = (6aR,11aR)-3,9-dihydroxypterocarpan + H2O. In terms of biological role, involved in pterocarpan phytoalexin biosynthesis. Catalyzes the last step in the biosynthesis of the phytoalexin medicarpin, and thereby contributes to plant defense reactions. Dirigent proteins impart stereoselectivity on the phenoxy radical-coupling reaction, yielding optically active lignans from two molecules of coniferyl alcohol in the biosynthesis of lignans, flavonolignans, and alkaloids and thus plays a central role in plant secondary metabolism. This chain is Pterocarpan synthase 1, found in Glycyrrhiza echinata (Licorice).